The chain runs to 1171 residues: Myosin-B/C (1171 aa).

The 676-residue stretch at glutamate 105–arginine 780 folds into the Myosin motor domain. Residue glycine 199–threonine 206 participates in ATP binding. Residues alanine 671–glutamate 681 form an actin-binding region. Positions isoleucine 810–proline 1171 are tail.

This sequence belongs to the TRAFAC class myosin-kinesin ATPase superfamily. Myosin family.

The protein resides in the cytoplasm. Functionally, myosins are actin-based motor molecules with ATPase activity. Unconventional myosins serve in intracellular movements. Their highly divergent tails are presumed to bind to membranous compartments, which would be moved relative to actin filaments. Plays a role in proper daughter cell budding and separation. The protein is Myosin-B/C of Toxoplasma gondii.